The chain runs to 211 residues: Pyridoxine/pyridoxamine 5'-phosphate oxidase (211 aa).

Substrate contacts are provided by residues 7-10 (RREY) and K65. Residues 60–65 (RIVLLK), 75–76 (YT), R81, K82, and Q104 contribute to the FMN site. Residues Y122, R126, and S130 each coordinate substrate. Residues 139 to 140 (QS) and W184 each bind FMN. 190 to 192 (RLH) is a substrate binding site. R194 provides a ligand contact to FMN.

Belongs to the pyridoxamine 5'-phosphate oxidase family. In terms of assembly, homodimer. FMN is required as a cofactor.

It carries out the reaction pyridoxamine 5'-phosphate + O2 + H2O = pyridoxal 5'-phosphate + H2O2 + NH4(+). The catalysed reaction is pyridoxine 5'-phosphate + O2 = pyridoxal 5'-phosphate + H2O2. Its pathway is cofactor metabolism; pyridoxal 5'-phosphate salvage; pyridoxal 5'-phosphate from pyridoxamine 5'-phosphate: step 1/1. It participates in cofactor metabolism; pyridoxal 5'-phosphate salvage; pyridoxal 5'-phosphate from pyridoxine 5'-phosphate: step 1/1. Functionally, catalyzes the oxidation of either pyridoxine 5'-phosphate (PNP) or pyridoxamine 5'-phosphate (PMP) into pyridoxal 5'-phosphate (PLP). The polypeptide is Pyridoxine/pyridoxamine 5'-phosphate oxidase (Vibrio atlanticus (strain LGP32) (Vibrio splendidus (strain Mel32))).